The primary structure comprises 345 residues: UPF0324 membrane protein CTC_01844 (345 aa).

10 helical membrane-spanning segments follow: residues 7 to 24 (YSVG…SGFI), 28 to 50 (IPYR…NPIV), 70 to 87 (LAII…VLEV), 91 to 113 (SLIV…GKLF), 120 to 142 (SGLI…SPVI), 152 to 174 (AISA…GKYF), 181 to 203 (YGLW…YAFS), 209 to 231 (FSVI…FSYI), 261 to 283 (IFPW…IIPN), and 316 to 338 (SGFA…SFLV).

Belongs to the UPF0324 family.

The protein resides in the cell membrane. The protein is UPF0324 membrane protein CTC_01844 of Clostridium tetani (strain Massachusetts / E88).